Here is a 428-residue protein sequence, read N- to C-terminus: Adenylosuccinate synthetase (428 aa).

GTP-binding positions include 11–17 (GDEGKGK) and 39–41 (GHT). D12 serves as the catalytic Proton acceptor. Mg(2+)-binding residues include D12 and G39. IMP-binding positions include 12-15 (DEGK), 37-40 (NAGH), T130, R144, N226, T241, and R305. H40 serves as the catalytic Proton donor. 301–307 (VTTGRKR) lines the substrate pocket. Residues R307, 333-335 (KLD), and 415-417 (GTG) each bind GTP.

The protein belongs to the adenylosuccinate synthetase family. As to quaternary structure, homodimer. It depends on Mg(2+) as a cofactor.

Its subcellular location is the cytoplasm. The enzyme catalyses IMP + L-aspartate + GTP = N(6)-(1,2-dicarboxyethyl)-AMP + GDP + phosphate + 2 H(+). It participates in purine metabolism; AMP biosynthesis via de novo pathway; AMP from IMP: step 1/2. Its function is as follows. Plays an important role in the de novo pathway and in the salvage pathway of purine nucleotide biosynthesis. Catalyzes the first committed step in the biosynthesis of AMP from IMP. The chain is Adenylosuccinate synthetase from Candida dubliniensis (strain CD36 / ATCC MYA-646 / CBS 7987 / NCPF 3949 / NRRL Y-17841) (Yeast).